Consider the following 249-residue polypeptide: Triosephosphate isomerase (249 aa).

8–10 (NWK) contacts substrate. The Electrophile role is filled by His95. Glu163 acts as the Proton acceptor in catalysis. Substrate contacts are provided by Gly169 and Ser209.

It belongs to the triosephosphate isomerase family. Homodimer.

The protein localises to the cytoplasm. It carries out the reaction D-glyceraldehyde 3-phosphate = dihydroxyacetone phosphate. It functions in the pathway carbohydrate biosynthesis; gluconeogenesis. It participates in carbohydrate degradation; glycolysis; D-glyceraldehyde 3-phosphate from glycerone phosphate: step 1/1. Functionally, involved in the gluconeogenesis. Catalyzes stereospecifically the conversion of dihydroxyacetone phosphate (DHAP) to D-glyceraldehyde-3-phosphate (G3P). This Orientia tsutsugamushi (strain Boryong) (Rickettsia tsutsugamushi) protein is Triosephosphate isomerase.